The sequence spans 61 residues: Probable tautomerase BH3814 (61 aa).

The active-site Proton acceptor; via imino nitrogen is Pro-2.

Belongs to the 4-oxalocrotonate tautomerase family.

This is Probable tautomerase BH3814 from Halalkalibacterium halodurans (strain ATCC BAA-125 / DSM 18197 / FERM 7344 / JCM 9153 / C-125) (Bacillus halodurans).